A 264-amino-acid polypeptide reads, in one-letter code: Thiazole synthase (264 aa).

Lys98 serves as the catalytic Schiff-base intermediate with DXP. 1-deoxy-D-xylulose 5-phosphate-binding positions include Gly159, 185 to 186 (AG), and 207 to 208 (AT).

The protein belongs to the ThiG family. In terms of assembly, homotetramer. Forms heterodimers with either ThiH or ThiS.

Its subcellular location is the cytoplasm. It carries out the reaction [ThiS sulfur-carrier protein]-C-terminal-Gly-aminoethanethioate + 2-iminoacetate + 1-deoxy-D-xylulose 5-phosphate = [ThiS sulfur-carrier protein]-C-terminal Gly-Gly + 2-[(2R,5Z)-2-carboxy-4-methylthiazol-5(2H)-ylidene]ethyl phosphate + 2 H2O + H(+). It participates in cofactor biosynthesis; thiamine diphosphate biosynthesis. Catalyzes the rearrangement of 1-deoxy-D-xylulose 5-phosphate (DXP) to produce the thiazole phosphate moiety of thiamine. Sulfur is provided by the thiocarboxylate moiety of the carrier protein ThiS. In vitro, sulfur can be provided by H(2)S. In Mycobacterium marinum (strain ATCC BAA-535 / M), this protein is Thiazole synthase.